The following is a 309-amino-acid chain: Protoheme IX farnesyltransferase (309 aa).

9 helical membrane passes run 35–55 (IGIV…AFYF), 64–84 (LHLV…SCAI), 114–134 (VLWL…MTTV), 135–155 (TAAV…TLWT), 161–181 (INTV…WTAV), 187–207 (IVPL…FLAL), 231–251 (MTKR…FYLF), 253–273 (LGVP…LLGL), and 289–309 (FVYS…ATLW).

The protein belongs to the UbiA prenyltransferase family. Protoheme IX farnesyltransferase subfamily. Interacts with CtaA.

The protein resides in the cell membrane. It catalyses the reaction heme b + (2E,6E)-farnesyl diphosphate + H2O = Fe(II)-heme o + diphosphate. It functions in the pathway porphyrin-containing compound metabolism; heme O biosynthesis; heme O from protoheme: step 1/1. Functionally, converts heme B (protoheme IX) to heme O by substitution of the vinyl group on carbon 2 of heme B porphyrin ring with a hydroxyethyl farnesyl side group. This Geobacillus kaustophilus (strain HTA426) protein is Protoheme IX farnesyltransferase.